A 384-amino-acid chain; its full sequence is S-adenosylmethionine synthase (384 aa).

Residue H15 participates in ATP binding. D17 contributes to the Mg(2+) binding site. Residue E43 coordinates K(+). Residues E56 and Q99 each contribute to the L-methionine site. The flexible loop stretch occupies residues 99–109 (QSPDINQGVDR). ATP is bound by residues 164–166 (DAK), 231–232 (RF), D240, 246–247 (RK), A263, and K267. D240 lines the L-methionine pocket. Residue K271 coordinates L-methionine.

The protein belongs to the AdoMet synthase family. Homotetramer; dimer of dimers. Mg(2+) serves as cofactor. K(+) is required as a cofactor.

Its subcellular location is the cytoplasm. The enzyme catalyses L-methionine + ATP + H2O = S-adenosyl-L-methionine + phosphate + diphosphate. It functions in the pathway amino-acid biosynthesis; S-adenosyl-L-methionine biosynthesis; S-adenosyl-L-methionine from L-methionine: step 1/1. In terms of biological role, catalyzes the formation of S-adenosylmethionine (AdoMet) from methionine and ATP. The overall synthetic reaction is composed of two sequential steps, AdoMet formation and the subsequent tripolyphosphate hydrolysis which occurs prior to release of AdoMet from the enzyme. This is S-adenosylmethionine synthase from Shewanella halifaxensis (strain HAW-EB4).